A 141-amino-acid polypeptide reads, in one-letter code: HTH-type transcriptional repressor NsrR (141 aa).

Residues glutamine 2–glutamine 129 enclose the HTH rrf2-type domain. The H-T-H motif DNA-binding region spans isoleucine 28–arginine 51. 3 residues coordinate [2Fe-2S] cluster: cysteine 91, cysteine 96, and cysteine 102.

It depends on [2Fe-2S] cluster as a cofactor.

Its function is as follows. Nitric oxide-sensitive repressor of genes involved in protecting the cell against nitrosative stress. May require iron for activity. The protein is HTH-type transcriptional repressor NsrR of Yersinia enterocolitica serotype O:8 / biotype 1B (strain NCTC 13174 / 8081).